Reading from the N-terminus, the 95-residue chain is Co-chaperonin GroES (95 aa).

This sequence belongs to the GroES chaperonin family. In terms of assembly, heptamer of 7 subunits arranged in a ring. Interacts with the chaperonin GroEL.

Its subcellular location is the cytoplasm. Functionally, together with the chaperonin GroEL, plays an essential role in assisting protein folding. The GroEL-GroES system forms a nano-cage that allows encapsulation of the non-native substrate proteins and provides a physical environment optimized to promote and accelerate protein folding. GroES binds to the apical surface of the GroEL ring, thereby capping the opening of the GroEL channel. The protein is Co-chaperonin GroES of Xylella fastidiosa (strain M23).